The primary structure comprises 487 residues: Calcium-binding tyrosine phosphorylation-regulated protein (487 aa).

The 38-residue stretch at 12-49 folds into the RIIa domain; sequence YGLKTLLEGISRAVLKTNPSDINQFAAAYFQELTMYRG. Basic and acidic residues-rich tracts occupy residues 78-91 and 101-117; these read KKLE…KTSV and KSTD…EYSD. 3 disordered regions span residues 78–163, 243–271, and 420–487; these read KKLE…AVSP, VDLG…QEPP, and IVSD…ATAE. A compositionally biased stretch (low complexity) spans 140–152; the sequence is SSSKPATPKATTP. 2 stretches are compositionally biased toward polar residues: residues 420 to 436 and 455 to 464; these read IVSD…NSVP and SGTSVKSSSG. Over residues 478–487 the composition is skewed to acidic residues; it reads IEPEGEATAE.

As to quaternary structure, interacts with FSCB. Post-translationally, phosphorylated on tyrosine residues during in vitro capacitation. Dephosphorylation affects its ability to bind calcium.

Its subcellular location is the cytoplasm. The protein resides in the cytoskeleton. It is found in the cell projection. It localises to the cilium. The protein localises to the flagellum. Its function is as follows. May function as a regulator of both motility- and head-associated functions such as capacitation and the acrosome reaction. May bind calcium in vitro. The polypeptide is Calcium-binding tyrosine phosphorylation-regulated protein (CABYR) (Macaca fascicularis (Crab-eating macaque)).